Consider the following 595-residue polypeptide: MQIIEIREPEQADFKPEQQIAVGIDFGTTNSLIAIAANRKVKVIKSIDDKELIPTTIDFTSNNFTIGNNKGLRSIKRLFGKTLKEILNTPALFSLVKDYLDVNSSELKLNFANKQLRVPEIAAEIFIYLKNQAEEQLKTNLTKAVITVPAHFNDAARGEVMLAAKIAGFEVLRLIAEPTAAAYAYGLNKNQKGCYLVYDLGGGTFDVSILNIQEGIFQVIATNGDNMLGGNDIDVVITQYLCNKFDLPNSIDTLQLAKKAKETLTYKDSFNNDNVSINKQTLEQLILPLVERTINIAQECLEQAGNPNIDGVILVGGATRTPLIKDELYKAFKIDILSDIDPDKAVVWGAALQAENLIAPHTNSLLIDVAPLSLGMELYGGIVEKIIMHNTPIPISVVKEFTTYVDNQTGIQFHILQGEREMAADCRSLARFELKGLPPMKAGYIRAEVTFSIDADGILSVSAYEKISNTSHAIEVKPNHGIDKTEIDIMLENAYKNAKIDYTTRLLQEAVIEAEAFIFSIERAIAEFTTLLSESEISIINSLLDNIKEAVHARDWILINNSIKEFKSKIKKSMDTKFNVIINDLLKGKNINQIK.

This sequence belongs to the heat shock protein 70 family.

Chaperone involved in the maturation of iron-sulfur cluster-containing proteins. Has a low intrinsic ATPase activity which is markedly stimulated by HscB. In Rickettsia rickettsii (strain Iowa), this protein is Chaperone protein HscA homolog.